Here is a 466-residue protein sequence, read N- to C-terminus: Delta-1 crystallin (466 aa).

It belongs to the lyase 1 family. Argininosuccinate lyase subfamily. In terms of assembly, homotetramer. As to expression, eye lens.

Delta crystallin, the principal crystallin in embryonic lens, is found only in birds and reptiles. This Meleagris gallopavo (Wild turkey) protein is Delta-1 crystallin (ASL1).